A 127-amino-acid polypeptide reads, in one-letter code: uncharacterized protein (127 aa).

A signal peptide spans 1 to 23; the sequence is MSKPLKFLLWSSLALLLLQIGSG.

This is an uncharacterized protein from Arabidopsis thaliana (Mouse-ear cress).